A 171-amino-acid chain; its full sequence is MTKWFNVGKIVNTHGVKGEIRVISRTDFPEERYKVGNTLYIWDEKGTDYLTVKVTSHRQHKTFDLLTLEGYNNVDEVEKLKGSLIKVPEEQLGELAEGEYYYHEIIGCNVVTEEGEALGTIKEILSPGANDVWVIKRPKGQDLLIPYIDDVVLQVNIENKLVTIHVMEGLL.

Residues 96 to 170 enclose the PRC barrel domain; that stretch reads AEGEYYYHEI…LVTIHVMEGL (75 aa).

The protein belongs to the RimM family. As to quaternary structure, binds ribosomal protein uS19.

The protein resides in the cytoplasm. Its function is as follows. An accessory protein needed during the final step in the assembly of 30S ribosomal subunit, possibly for assembly of the head region. Essential for efficient processing of 16S rRNA. May be needed both before and after RbfA during the maturation of 16S rRNA. It has affinity for free ribosomal 30S subunits but not for 70S ribosomes. The sequence is that of Ribosome maturation factor RimM from Bacillus mycoides (strain KBAB4) (Bacillus weihenstephanensis).